Consider the following 156-residue polypeptide: MQVSGTIVVILMAANVEAKIYERCDLAKKLEAAGLNGFKGYTIGDWLCMAHYESGFDTSFVNHNPDGSSEYGIFQLNSAWWCYNGVTPSENLCHMDCHELLNRHILDDIMCAKKVVSSESGMSAWDSWNQHCYGYDLSEWLRGCHMNAKPNKKIIS.

The N-terminal stretch at 1–18 (MQVSGTIVVILMAANVEA) is a signal peptide. The 129-residue stretch at 19–147 (KIYERCDLAK…SEWLRGCHMN (129 aa)) folds into the C-type lysozyme domain. Cystine bridges form between Cys-24/Cys-144, Cys-48/Cys-132, Cys-82/Cys-97, and Cys-93/Cys-111. Glu-53 is a catalytic residue.

It belongs to the glycosyl hydrolase 22 family.

The protein resides in the secreted. The enzyme catalyses Hydrolysis of (1-&gt;4)-beta-linkages between N-acetylmuramic acid and N-acetyl-D-glucosamine residues in a peptidoglycan and between N-acetyl-D-glucosamine residues in chitodextrins.. The chain is Sperm acrosome-associated protein 5 (SPACA5) from Bos taurus (Bovine).